Here is a 406-residue protein sequence, read N- to C-terminus: Solute carrier family 22 member 18 (406 aa).

The next 10 helical transmembrane spans lie at 8-28, 43-63, 85-105, 140-160, 168-188, 226-246, 258-278, 295-315, 316-336, and 374-394; these read GIII…FMQF, VSFG…GPVF, ALYL…FLLF, LGLC…TLNT, AILA…CVPA, FLVK…FSII, AGYL…LVIG, LVFA…HFCF, LMPG…SMLT, and GVPI…LVLW.

It belongs to the major facilitator (TC 2.A.1) superfamily. Organic cation transporter (TC 2.A.1.19) family. As to quaternary structure, interacts with RNF167. As to expression, expressed at high levels in fetal and adult kidney and liver, and extraembryonic membranes (yolk sac). Expressed at moderate levels in intestine, heart, lung and testis.

The protein resides in the apical cell membrane. May act as a transporter of organic cations based on a proton efflux antiport mechanism. May play a role in the transport of chloroquine and quinidine-related compounds in kidney. Plays a role in the regulation of lipid metabolism. In Mus musculus (Mouse), this protein is Solute carrier family 22 member 18 (Slc67a1).